We begin with the raw amino-acid sequence, 414 residues long: 2,3-bisphosphoglycerate-independent phosphoglycerate mutase (414 aa).

This sequence belongs to the BPG-independent phosphoglycerate mutase family. A-PGAM subfamily.

It catalyses the reaction (2R)-2-phosphoglycerate = (2R)-3-phosphoglycerate. It participates in carbohydrate degradation; glycolysis; pyruvate from D-glyceraldehyde 3-phosphate: step 3/5. Its function is as follows. Catalyzes the interconversion of 2-phosphoglycerate and 3-phosphoglycerate. In Saccharolobus solfataricus (strain ATCC 35092 / DSM 1617 / JCM 11322 / P2) (Sulfolobus solfataricus), this protein is 2,3-bisphosphoglycerate-independent phosphoglycerate mutase.